A 156-amino-acid chain; its full sequence is C-type lectin lectoxin-Phi2 (156 aa).

Residues 1 to 23 (MGRFIFVSLGLLVLAFSLSGIGA) form the signal peptide. 3 disulfide bridges follow: Cys27–Cys38, Cys55–Cys154, and Cys129–Cys146. One can recognise a C-type lectin domain in the interval 34–155 (HNVSCYKLIN…CNRRHRFLCK (122 aa)). N-linked (GlcNAc...) asparagine glycosylation is found at Asn35 and Asn109. Positions 119 to 121 (EPN) match the Mannose-binding motif. Ca(2+) is bound by residues Glu127, Asn142, and Asp143.

The protein belongs to the true venom lectin family. As to expression, expressed by the venom gland.

It is found in the secreted. Mannose-binding lectin which recognizes specific carbohydrate structures and agglutinates a variety of animal cells by binding to cell-surface glycoproteins and glycolipids. May be a calcium-dependent lectin. This chain is C-type lectin lectoxin-Phi2, found in Philodryas olfersii (Green snake).